The chain runs to 620 residues: bZIP transcription factor 49 (620 aa).

Topologically, residues 1–287 (MAEPVLEDTY…VAKVKKFKKV (287 aa)) are cytoplasmic. Over residues 109-135 (SSCYNRESPTDSDFSGTSQSLSFSGQD) the composition is skewed to polar residues. The disordered stretch occupies residues 109–155 (SSCYNRESPTDSDFSGTSQSLSFSGQDSAKRKTEIEEDSSDESRRLG). One can recognise a bZIP domain in the interval 172 to 235 (EKKKNVRLVR…VTLRQQMGTR (64 aa)). The interval 173–205 (KKKNVRLVRNRESAHLSRQRKKHYVEELEDKVK) is basic motif. Positions 211-218 (ISELSSKM) are leucine-zipper. A helical transmembrane segment spans residues 288 to 308 (ASFSVFGFLFCMFLFGALVNI). Residues 309-620 (SYGEYKSNYV…RPDVPHLMTS (312 aa)) are Lumenal-facing. 3 disordered regions span residues 343 to 364 (DSDQ…PRNS), 398 to 460 (ARDS…SNDQ), and 505 to 557 (PASP…RETK). N-linked (GlcNAc...) asparagine glycans are attached at residues Asn351 and Asn363. Polar residues predominate over residues 352–364 (VSETENLGPPRNS). Basic and acidic residues-rich tracts occupy residues 398 to 409 (ARDSETKNEEGK) and 432 to 441 (RTRDVSKHLY). Composition is skewed to polar residues over residues 447-460 (GLSS…SNDQ) and 508-519 (PHTQQCKNTSDT). Residue Asn515 is glycosylated (N-linked (GlcNAc...) asparagine). The RRIL cleavage motif signature appears at 526–529 (RRIL). N-linked (GlcNAc...) asparagine glycans are attached at residues Asn539 and Asn546. Residues 540–557 (LTKEDHNSSSKDKFRETK) show a composition bias toward basic and acidic residues.

It belongs to the bZIP family. Interacts with BZIP28.

It localises to the endoplasmic reticulum membrane. The protein localises to the nucleus. Functionally, transcriptional activator involved in stress responses. The polypeptide is bZIP transcription factor 49 (Arabidopsis thaliana (Mouse-ear cress)).